The chain runs to 674 residues: Pannexin-2 (674 aa).

At 11–53 (MATALLAGEKLRELILPGSQDDKAGALAALLLQLKLELPFDRV) the chain is on the cytoplasmic side. The chain crosses the membrane as a helical span at residues 54–74 (VTIGTVLVPILLVTLVFTKNF). Residues 75–125 (AEEPIYCYTPHNFTRDQALYARGYCWTELRDALPGVDASLWPSLFEHKFLP) are Extracellular-facing. Residue N86 is glycosylated (N-linked (GlcNAc...) asparagine). Residues 126–146 (YALLAFAAIMYVPALGWEFLA) traverse the membrane as a helical segment. The Cytoplasmic portion of the chain corresponds to 147–230 (STRLTSELNF…NFLAKLYLAR (84 aa)). The chain crosses the membrane as a helical span at residues 231–251 (HVLILLLSVVPISYLCTYYAT). At 252–295 (QKQNEFTCALGASPDGPVGSAGPTVRVSCKLPSVQLQRIIAGVD) the chain is on the extracellular side. Residues 296-316 (IVLLCFMNLIILVNLIHLFIF) form a helical membrane-spanning segment. The Cytoplasmic segment spans residues 317–674 (RKSNFIFDKL…PRTVVSTVEF (358 aa)). Polar residues predominate over residues 394-408 (TTPTVRDSGIQTVDP). 2 disordered regions span residues 394-426 (TTPT…VVKR) and 485-510 (AHHY…KKHT). S590 and S601 each carry phosphoserine.

The protein belongs to the pannexin family. As to quaternary structure, forms PANX1/PANX2-heteromeric intercellular channels on coexpression in paired Xenopus oocytes. Does not form homomeric channels. Post-translationally, S-palmitoylated in neural stem and progenitor cells. Cleaved by CASP3 and CASP7 during apoptosis. Cleavage has no effect on it function. In terms of tissue distribution, expressed in the eye, thyroid, prostate, kidney and liver. Abundantly expressed in the CNS, including hippocampus, olfactory bulb, cortex, cerebellum. Not detected in the white matter.

The protein resides in the cell membrane. It is found in the golgi apparatus membrane. Its subcellular location is the endoplasmic reticulum membrane. In terms of biological role, structural component of the gap junctions and the hemichannels. This chain is Pannexin-2 (Panx2), found in Rattus norvegicus (Rat).